Here is a 290-residue protein sequence, read N- to C-terminus: tRNA(Ile)-lysidine synthase, chloroplastic (290 aa).

ATP is bound at residue 33–38; sequence SGGQDS.

The protein belongs to the tRNA(Ile)-lysidine synthase family.

The protein localises to the plastid. It localises to the chloroplast. It catalyses the reaction cytidine(34) in tRNA(Ile2) + L-lysine + ATP = lysidine(34) in tRNA(Ile2) + AMP + diphosphate + H(+). Its function is as follows. Ligates lysine onto the cytidine present at position 34 of the AUA codon-specific tRNA(Ile) that contains the anticodon CAU, in an ATP-dependent manner. Cytidine is converted to lysidine, thus changing the amino acid specificity of the tRNA from methionine to isoleucine. The polypeptide is tRNA(Ile)-lysidine synthase, chloroplastic (Cyanidioschyzon merolae (strain NIES-3377 / 10D) (Unicellular red alga)).